We begin with the raw amino-acid sequence, 191 residues long: Peptidyl-tRNA hydrolase (191 aa).

Tyrosine 17 contacts tRNA. Histidine 22 functions as the Proton acceptor in the catalytic mechanism. TRNA-binding residues include tyrosine 68, asparagine 70, and asparagine 116.

It belongs to the PTH family. In terms of assembly, monomer.

It localises to the cytoplasm. It catalyses the reaction an N-acyl-L-alpha-aminoacyl-tRNA + H2O = an N-acyl-L-amino acid + a tRNA + H(+). In terms of biological role, hydrolyzes ribosome-free peptidyl-tRNAs (with 1 or more amino acids incorporated), which drop off the ribosome during protein synthesis, or as a result of ribosome stalling. Its function is as follows. Catalyzes the release of premature peptidyl moieties from peptidyl-tRNA molecules trapped in stalled 50S ribosomal subunits, and thus maintains levels of free tRNAs and 50S ribosomes. The polypeptide is Peptidyl-tRNA hydrolase (Mycobacterium ulcerans (strain Agy99)).